The chain runs to 1297 residues: Protein Atossa (1297 aa).

Disordered stretches follow at residues 1–22 and 117–149; these read MIPT…GASA and TNPY…THQR. The segment covering 133-144 has biased composition (low complexity); sequence GSGSTGSPSSSS. The interval 174 to 182 is transactivation domain 1 (TAD1); that stretch reads VSLAINDLN. Disordered regions lie at residues 206 to 227, 287 to 311, 518 to 655, 704 to 741, and 1017 to 1048; these read SSAG…NSSD, TPTT…KHGP, GLPH…ETQS, SNGT…SSAD, and AAHK…DLES. Composition is skewed to low complexity over residues 213 to 226 and 287 to 305; these read NNSS…SNSS and TPTT…SSAS. Residues 564 to 578 show a composition bias toward polar residues; it reads SALTPTTTAGGSNCD. Basic residues predominate over residues 605 to 620; that stretch reads QKYRKRMQRRDKKRER. Low complexity-rich tracts occupy residues 643-655 and 706-716; these read SQTQ…ETQS and GTANGSTNGAT. Acidic residues predominate over residues 717–731; that stretch reads DDGDDSDTTASEMEE. The interval 1074 to 1132 is required for macropage invasion; the sequence is LLGNLEESLLQRRLMPKIEVMGFTLQLGASGGFCPTQVNIPAVSYFYELHGETLSTPYL. Positions 1150-1158 are transactivation domain 2 (TAD2); the sequence is VQATLLNPI. The tract at residues 1192–1213 is disordered; sequence SQDQDEGHKVPRSPTVTSTTSK. The span at 1203–1212 shows a compositional bias: low complexity; it reads RSPTVTSTTS.

The protein belongs to the ATOS family. As to expression, expressed in macrophages.

Its subcellular location is the nucleus. In terms of biological role, transcription regulator that synchronizes transcriptional and translational programs to promote macrophage invasion of tissues. Required in macrophages for their early invasion into the extended germband. Induces transcriptional expression of metabolic enzymes as well as of the translational regulator pths/DDX47. With pths/DDX47, adjusts transcription and translation of a subset of OXPHOS genes to increase mitochondrial bioenergetics and allow macrophage tissue invasion. This is Protein Atossa from Drosophila melanogaster (Fruit fly).